A 146-amino-acid chain; its full sequence is Probable acetyltransferase HI_0677 (146 aa).

Positions 1-146 (MKLFKAEQWN…ERLFELSLSC (146 aa)) constitute an N-acetyltransferase domain.

This Haemophilus influenzae (strain ATCC 51907 / DSM 11121 / KW20 / Rd) protein is Probable acetyltransferase HI_0677.